The primary structure comprises 156 residues: Small ribosomal subunit protein uS7 (156 aa).

The protein belongs to the universal ribosomal protein uS7 family. Part of the 30S ribosomal subunit. Contacts proteins S9 and S11.

In terms of biological role, one of the primary rRNA binding proteins, it binds directly to 16S rRNA where it nucleates assembly of the head domain of the 30S subunit. Is located at the subunit interface close to the decoding center, probably blocks exit of the E-site tRNA. The sequence is that of Small ribosomal subunit protein uS7 from Thermobifida fusca (strain YX).